The chain runs to 680 residues: DNA-directed RNA polymerase subunit beta' (680 aa).

4 residues coordinate Zn(2+): Cys69, Cys71, Cys87, and Cys90. 3 residues coordinate Mg(2+): Asp489, Asp491, and Asp493.

It belongs to the RNA polymerase beta' chain family. RpoC1 subfamily. As to quaternary structure, in plastids the minimal PEP RNA polymerase catalytic core is composed of four subunits: alpha, beta, beta', and beta''. When a (nuclear-encoded) sigma factor is associated with the core the holoenzyme is formed, which can initiate transcription. Mg(2+) is required as a cofactor. Zn(2+) serves as cofactor.

The protein localises to the plastid. It localises to the chloroplast. It catalyses the reaction RNA(n) + a ribonucleoside 5'-triphosphate = RNA(n+1) + diphosphate. In terms of biological role, DNA-dependent RNA polymerase catalyzes the transcription of DNA into RNA using the four ribonucleoside triphosphates as substrates. The sequence is that of DNA-directed RNA polymerase subunit beta' from Ceratophyllum demersum (Rigid hornwort).